Here is a 450-residue protein sequence, read N- to C-terminus: Phosphoglucosamine mutase (450 aa).

S101 serves as the catalytic Phosphoserine intermediate. Mg(2+) contacts are provided by S101, D240, D242, and D244. Residue S101 is modified to Phosphoserine.

The protein belongs to the phosphohexose mutase family. Mg(2+) serves as cofactor. Post-translationally, activated by phosphorylation. Phosphorylated by StkP in vivo.

The enzyme catalyses alpha-D-glucosamine 1-phosphate = D-glucosamine 6-phosphate. Its function is as follows. Catalyzes the conversion of glucosamine-6-phosphate to glucosamine-1-phosphate. This is Phosphoglucosamine mutase from Streptococcus pneumoniae (strain ATCC BAA-255 / R6).